The primary structure comprises 400 residues: Coenzyme A biosynthesis bifunctional protein CoaBC (400 aa).

Positions 1–190 (MKLNGKHIVV…SQKQDLQGLN (190 aa)) are phosphopantothenoylcysteine decarboxylase. The Proton donor role is filled by C158. The tract at residues 191 to 400 (VSITAGPTRE…EIIERYQKTL (210 aa)) is phosphopantothenate--cysteine ligase. CTP is bound by residues 273-275 (GCA), D279, K289, 305-308 (PDII), F324, K338, and K342.

The protein in the N-terminal section; belongs to the HFCD (homo-oligomeric flavin containing Cys decarboxylase) superfamily. In the C-terminal section; belongs to the PPC synthetase family. Mg(2+) is required as a cofactor. Requires FMN as cofactor.

It carries out the reaction N-[(R)-4-phosphopantothenoyl]-L-cysteine + H(+) = (R)-4'-phosphopantetheine + CO2. It catalyses the reaction (R)-4'-phosphopantothenate + L-cysteine + CTP = N-[(R)-4-phosphopantothenoyl]-L-cysteine + CMP + diphosphate + H(+). Its pathway is cofactor biosynthesis; coenzyme A biosynthesis; CoA from (R)-pantothenate: step 2/5. The protein operates within cofactor biosynthesis; coenzyme A biosynthesis; CoA from (R)-pantothenate: step 3/5. Functionally, catalyzes two sequential steps in the biosynthesis of coenzyme A. In the first step cysteine is conjugated to 4'-phosphopantothenate to form 4-phosphopantothenoylcysteine. In the second step the latter compound is decarboxylated to form 4'-phosphopantotheine. This Haemophilus influenzae (strain ATCC 51907 / DSM 11121 / KW20 / Rd) protein is Coenzyme A biosynthesis bifunctional protein CoaBC.